The following is a 127-amino-acid chain: Aspartate 1-decarboxylase (127 aa).

Ser25 acts as the Schiff-base intermediate with substrate; via pyruvic acid in catalysis. At Ser25 the chain carries Pyruvic acid (Ser). Thr57 is a binding site for substrate. The active-site Proton donor is the Tyr58. Residue 73-75 participates in substrate binding; that stretch reads GAA.

It belongs to the PanD family. Heterooctamer of four alpha and four beta subunits. Requires pyruvate as cofactor. In terms of processing, is synthesized initially as an inactive proenzyme, which is activated by self-cleavage at a specific serine bond to produce a beta-subunit with a hydroxyl group at its C-terminus and an alpha-subunit with a pyruvoyl group at its N-terminus.

It localises to the cytoplasm. It catalyses the reaction L-aspartate + H(+) = beta-alanine + CO2. The protein operates within cofactor biosynthesis; (R)-pantothenate biosynthesis; beta-alanine from L-aspartate: step 1/1. Catalyzes the pyruvoyl-dependent decarboxylation of aspartate to produce beta-alanine. The sequence is that of Aspartate 1-decarboxylase from Anoxybacillus flavithermus (strain DSM 21510 / WK1).